Consider the following 629-residue polypeptide: Methionine--tRNA ligase (629 aa).

Residues 10-20 carry the 'HIGH' region motif; it reads YYVNSEPHIGS. Zn(2+) contacts are provided by Cys125, Cys128, Cys146, and Cys149. Positions 297-301 match the 'KMSKS' region motif; that stretch reads KISKS. An ATP-binding site is contributed by Lys300. One can recognise a tRNA-binding domain in the interval 529-629; the sequence is DFSKVDLRIA…GEITPGAKVS (101 aa).

The protein belongs to the class-I aminoacyl-tRNA synthetase family. MetG type 2A subfamily. As to quaternary structure, homodimer. The cofactor is Zn(2+).

The protein resides in the cytoplasm. It carries out the reaction tRNA(Met) + L-methionine + ATP = L-methionyl-tRNA(Met) + AMP + diphosphate. Is required not only for elongation of protein synthesis but also for the initiation of all mRNA translation through initiator tRNA(fMet) aminoacylation. The protein is Methionine--tRNA ligase (metG) of Thermotoga maritima (strain ATCC 43589 / DSM 3109 / JCM 10099 / NBRC 100826 / MSB8).